We begin with the raw amino-acid sequence, 461 residues long: Vimentin (461 aa).

Low complexity-rich tracts occupy residues 1–14 and 35–52; these read MNRTTSRQTTSSSS and SSRQYSSPVRSSRMSYSV. The segment at 1-52 is disordered; it reads MNRTTSRQTTSSSSYKRMFGGEGRPSVGMARSTLSSRQYSSPVRSSRMSYSV. The interval 1 to 91 is head; the sequence is MNRTTSRQTT…FALSDAINSE (91 aa). Positions 92–127 are coil 1A; it reads FKANRTNEKAEMQHLNDRFASYIDKVRFLEQQNKIL. A coiled-coil region spans residues 92 to 127; the sequence is FKANRTNEKAEMQHLNDRFASYIDKVRFLEQQNKIL. An IF rod domain is found at 99–407; that stretch reads EKAEMQHLND…KLLEGEESRI (309 aa). Positions 128–149 are linker 1; it reads LAELEQLKGKGASRIGDLYEDE. The stretch at 150–241 forms a coiled coil; the sequence is MRDLRRQVDQ…KLHDEEVAEL (92 aa). The tract at residues 150-241 is coil 1B; that stretch reads MRDLRRQVDQ…KLHDEEVAEL (92 aa). Positions 242–264 are linker 12; sequence QAQIQDQHVQIDMDVAKPDLTAA. A coil 2 region spans residues 265-403; the sequence is LRDVRVQYET…ATYRKLLEGE (139 aa). Residues 299–403 adopt a coiled-coil conformation; the sequence is NRNTDAIRQA…ATYRKLLEGE (105 aa). The tract at residues 404-461 is tail; the sequence is ESRITTPMPNFSSFNLRESMLEARPMIDNLSKKVVIKTIETRDGHVINESTQNHDDLE.

Belongs to the intermediate filament family. As to quaternary structure, homomer assembled from elementary dimers. In terms of processing, one of the most prominent phosphoproteins in various cells of mesenchymal origin. Phosphorylation is enhanced during cell division, at which time vimentin filaments are significantly reorganized.

It localises to the cytoplasm. Its subcellular location is the cytoskeleton. The protein localises to the nucleus matrix. In terms of biological role, vimentins are class-III intermediate filaments found in various non-epithelial cells, especially mesenchymal cells. Vimentin is attached to the nucleus, endoplasmic reticulum, and mitochondria, either laterally or terminally. This chain is Vimentin (vim), found in Oncorhynchus mykiss (Rainbow trout).